A 359-amino-acid chain; its full sequence is Tryptophan 2,3-dioxygenase (359 aa).

Substrate is bound by residues 38–42 and arginine 109; that span reads FIIVH. Heme is bound at residue histidine 295. Threonine 309 is a substrate binding site.

It belongs to the tryptophan 2,3-dioxygenase family. In terms of assembly, homotetramer. Requires heme as cofactor.

It carries out the reaction L-tryptophan + O2 = N-formyl-L-kynurenine. It functions in the pathway amino-acid degradation; L-tryptophan degradation via kynurenine pathway; L-kynurenine from L-tryptophan: step 1/2. Its function is as follows. Heme-dependent dioxygenase that catalyzes the oxidative cleavage of the L-tryptophan (L-Trp) pyrrole ring and converts L-tryptophan to N-formyl-L-kynurenine. Catalyzes the oxidative cleavage of the indole moiety. This Bdellovibrio bacteriovorus (strain ATCC 15356 / DSM 50701 / NCIMB 9529 / HD100) protein is Tryptophan 2,3-dioxygenase.